The following is a 195-amino-acid chain: BAG family molecular chaperone regulator 1A (195 aa).

In terms of domain architecture, Ubiquitin-like spans 6–72 (STVTIHYGNQ…KLGLKNHSKI (67 aa)). The tract at residues 78–98 (HKQQRGSKEKDTVEPAPKAEA) is disordered. The segment covering 83–98 (GSKEKDTVEPAPKAEA) has biased composition (basic and acidic residues). The 82-residue stretch at 109-190 (EIKAIDQYVD…KMLDHVDQTS (82 aa)) folds into the BAG domain.

Binds to the ATPase domain of HSP70/HSC chaperones.

Its function is as follows. Inhibits the chaperone activity of HSP70/HSC70 by promoting substrate release. The polypeptide is BAG family molecular chaperone regulator 1A (bag101) (Schizosaccharomyces pombe (strain 972 / ATCC 24843) (Fission yeast)).